The sequence spans 167 residues: Peptidyl-prolyl cis-trans isomerase-like 3 (167 aa).

Positions 1–153 (MSVTLHTNLG…QEIKLLNVTV (153 aa)) constitute a PPIase cyclophilin-type domain.

The protein belongs to the cyclophilin-type PPIase family. PPIL3 subfamily.

It carries out the reaction [protein]-peptidylproline (omega=180) = [protein]-peptidylproline (omega=0). Functionally, PPIases accelerate the folding of proteins. It catalyzes the cis-trans isomerization of proline imidic peptide bonds in oligopeptides. This Cryptococcus neoformans var. neoformans serotype D (strain B-3501A) (Filobasidiella neoformans) protein is Peptidyl-prolyl cis-trans isomerase-like 3 (CYP10).